The following is a 269-amino-acid chain: Tryptophan synthase alpha chain (269 aa).

Active-site proton acceptor residues include glutamate 49 and aspartate 60.

Belongs to the TrpA family. As to quaternary structure, tetramer of two alpha and two beta chains.

The catalysed reaction is (1S,2R)-1-C-(indol-3-yl)glycerol 3-phosphate + L-serine = D-glyceraldehyde 3-phosphate + L-tryptophan + H2O. Its pathway is amino-acid biosynthesis; L-tryptophan biosynthesis; L-tryptophan from chorismate: step 5/5. The alpha subunit is responsible for the aldol cleavage of indoleglycerol phosphate to indole and glyceraldehyde 3-phosphate. In Buchnera aphidicola subsp. Schlechtendalia chinensis, this protein is Tryptophan synthase alpha chain.